Reading from the N-terminus, the 118-residue chain is NADH-quinone oxidoreductase subunit A (118 aa).

Transmembrane regions (helical) follow at residues 6-26 (LIIG…LLTA), 61-81 (FMYG…LPWA), and 87-107 (LGLF…IGLW).

It belongs to the complex I subunit 3 family. NDH-1 is composed of 14 different subunits. Subunits NuoA, H, J, K, L, M, N constitute the membrane sector of the complex.

The protein localises to the cell membrane. It carries out the reaction a quinone + NADH + 5 H(+)(in) = a quinol + NAD(+) + 4 H(+)(out). NDH-1 shuttles electrons from NADH, via FMN and iron-sulfur (Fe-S) centers, to quinones in the respiratory chain. The immediate electron acceptor for the enzyme in this species is believed to be a menaquinone. Couples the redox reaction to proton translocation (for every two electrons transferred, four hydrogen ions are translocated across the cytoplasmic membrane), and thus conserves the redox energy in a proton gradient. The polypeptide is NADH-quinone oxidoreductase subunit A (Clostridium beijerinckii (strain ATCC 51743 / NCIMB 8052) (Clostridium acetobutylicum)).